Consider the following 375-residue polypeptide: 23S rRNA (uracil(747)-C(5))-methyltransferase RlmC (375 aa).

4 residues coordinate [4Fe-4S] cluster: cysteine 3, cysteine 11, cysteine 14, and cysteine 87. S-adenosyl-L-methionine is bound by residues glutamine 212, phenylalanine 241, glutamate 262, and asparagine 307. Cysteine 334 (nucleophile) is an active-site residue.

Belongs to the class I-like SAM-binding methyltransferase superfamily. RNA M5U methyltransferase family. RlmC subfamily.

It catalyses the reaction uridine(747) in 23S rRNA + S-adenosyl-L-methionine = 5-methyluridine(747) in 23S rRNA + S-adenosyl-L-homocysteine + H(+). In terms of biological role, catalyzes the formation of 5-methyl-uridine at position 747 (m5U747) in 23S rRNA. The sequence is that of 23S rRNA (uracil(747)-C(5))-methyltransferase RlmC from Enterobacter sp. (strain 638).